Here is a 435-residue protein sequence, read N- to C-terminus: MAYPVVAIVGRPNVGKSTLFNRIAGERISIVEDTPGVTRDRIYSRAEWLGTEFRMIDTGGIDMGDEPFLTQITQQAEIAIDEADVIVFIVSAPEGITDADEKVAKILYRADKPVILAVNKADNPEVRESIYDFYSLGFGDPYPVSGVHGLGLGDLLDAVVKEFPEKDGAPKDDSIRFSLIGRPNVGKSSLVNAMLGEERVIVSNIAGTTRDAIDTKFVADDTKFTMVDTAGIRKRGKVYENTERYSVMRAMRAIDDSDVVLVVLNAEEGIREQDKRVAGYAHEAGRGIIILVNKWDTLKKDNHTLTDFQNLIRIEFQYLSYAPIIFVSAKTGQRLEQLPEMIKRVADNHNKRVQSATLNDVVMDAIALNPTPSDNGKRLRVYYATQVAIAPPTFVVFVNDPKMMHFSYERFLENQIREHFDFEGTPIHLIERARK.

EngA-type G domains lie at 4 to 167 (PVVA…PEKD) and 175 to 350 (IRFS…DNHN). Residues 10 to 17 (GRPNVGKS), 57 to 61 (DTGGI), 119 to 122 (NKAD), 181 to 188 (GRPNVGKS), 228 to 232 (DTAGI), and 293 to 296 (NKWD) contribute to the GTP site. The region spanning 351 to 435 (KRVQSATLND…PIHLIERARK (85 aa)) is the KH-like domain.

Belongs to the TRAFAC class TrmE-Era-EngA-EngB-Septin-like GTPase superfamily. EngA (Der) GTPase family. In terms of assembly, associates with the 50S ribosomal subunit.

Its function is as follows. GTPase that plays an essential role in the late steps of ribosome biogenesis. This chain is GTPase Der, found in Levilactobacillus brevis (strain ATCC 367 / BCRC 12310 / CIP 105137 / JCM 1170 / LMG 11437 / NCIMB 947 / NCTC 947) (Lactobacillus brevis).